The following is a 311-amino-acid chain: tRNA-cytidine(32) 2-sulfurtransferase (311 aa).

Residues 47–52 (SGGKDS) carry the PP-loop motif motif. Positions 122, 125, and 213 each coordinate [4Fe-4S] cluster.

The protein belongs to the TtcA family. Homodimer. The cofactor is Mg(2+). It depends on [4Fe-4S] cluster as a cofactor.

Its subcellular location is the cytoplasm. It carries out the reaction cytidine(32) in tRNA + S-sulfanyl-L-cysteinyl-[cysteine desulfurase] + AH2 + ATP = 2-thiocytidine(32) in tRNA + L-cysteinyl-[cysteine desulfurase] + A + AMP + diphosphate + H(+). Its pathway is tRNA modification. Catalyzes the ATP-dependent 2-thiolation of cytidine in position 32 of tRNA, to form 2-thiocytidine (s(2)C32). The sulfur atoms are provided by the cysteine/cysteine desulfurase (IscS) system. This is tRNA-cytidine(32) 2-sulfurtransferase from Escherichia fergusonii (strain ATCC 35469 / DSM 13698 / CCUG 18766 / IAM 14443 / JCM 21226 / LMG 7866 / NBRC 102419 / NCTC 12128 / CDC 0568-73).